Reading from the N-terminus, the 521-residue chain is GMP synthase [glutamine-hydrolyzing] (521 aa).

Residues lysine 8 to leucine 203 form the Glutamine amidotransferase type-1 domain. Cysteine 85 (nucleophile) is an active-site residue. Catalysis depends on residues histidine 177 and glutamate 179. Residues tryptophan 204–arginine 396 enclose the GMPS ATP-PPase domain. Serine 231 to serine 237 provides a ligand contact to ATP.

In terms of assembly, homodimer.

It carries out the reaction XMP + L-glutamine + ATP + H2O = GMP + L-glutamate + AMP + diphosphate + 2 H(+). It participates in purine metabolism; GMP biosynthesis; GMP from XMP (L-Gln route): step 1/1. Its function is as follows. Catalyzes the synthesis of GMP from XMP. This chain is GMP synthase [glutamine-hydrolyzing], found in Xanthomonas axonopodis pv. citri (strain 306).